Reading from the N-terminus, the 92-residue chain is Putative septation protein SpoVG (92 aa).

Belongs to the SpoVG family.

Could be involved in septation. The protein is Putative septation protein SpoVG of Clostridium botulinum (strain Eklund 17B / Type B).